Reading from the N-terminus, the 862-residue chain is Protein translocase subunit SecA (862 aa).

ATP-binding positions include Q88, 106 to 110 (GEGKT), and D506. Residues C839, C841, C850, and H851 each contribute to the Zn(2+) site.

The protein belongs to the SecA family. In terms of assembly, monomer and homodimer. Part of the essential Sec protein translocation apparatus which comprises SecA, SecYEG and auxiliary proteins SecDF-YajC and YidC. Zn(2+) is required as a cofactor.

It is found in the cell inner membrane. The protein resides in the cytoplasm. It catalyses the reaction ATP + H2O + cellular proteinSide 1 = ADP + phosphate + cellular proteinSide 2.. Functionally, part of the Sec protein translocase complex. Interacts with the SecYEG preprotein conducting channel. Has a central role in coupling the hydrolysis of ATP to the transfer of proteins into and across the cell membrane, serving as an ATP-driven molecular motor driving the stepwise translocation of polypeptide chains across the membrane. This chain is Protein translocase subunit SecA, found in Campylobacter jejuni subsp. doylei (strain ATCC BAA-1458 / RM4099 / 269.97).